The sequence spans 2261 residues: Phospholipid-transporting ATPase ABCA1 (2261 aa).

Cys3 carries the S-palmitoyl cysteine lipid modification. The N-linked (GlcNAc...) asparagine glycan is linked to Asn14. A helical transmembrane segment spans residues 22–42 (TCQLLLEVAWPLFIFLILISV). Cys23 carries the S-palmitoyl cysteine lipid modification. Topologically, residues 43-639 (RLSYPPYEQH…DIFLRVMSRS (597 aa)) are extracellular. Residues 69–80 (WVQGIICNANNP) form an annulus domain 1 region. Cysteines 75 and 309 form a disulfide. Asn98, Asn151, Asn161, Asn196, Asn244, Asn292, Asn337, and Asn349 each carry an N-linked (GlcNAc...) asparagine glycan. The interval 368 to 379 (SRIIWKALKPLL) is annulus domain 2. Asn400, Asn478, Asn489, and Asn521 each carry an N-linked (GlcNAc...) asparagine glycan. The gateway domain stretch occupies residues 564-594 (ERTNKIKDGYWDPGPRADPFEDMRYVWGGFA). Transmembrane regions (helical) follow at residues 640–660 (MPLF…KGIV), 683–703 (FSWF…LVVI), 716–736 (SVVF…CFLI), 745–765 (LAAA…VLCV), and 777–797 (IFAS…FALF). Residue Asn820 is glycosylated (N-linked (GlcNAc...) asparagine). The chain crosses the membrane as a helical span at residues 827–847 (MMLFDTFLYGVMTWYIEAVFP). One can recognise an ABC transporter 1 domain in the interval 899 to 1131 (VSIQNLVKVY…LGTGYYLTLV (233 aa)). Residue 933-940 (GHNGAGKT) coordinates ATP. A helical transmembrane segment spans residues 1041–1057 (LSVALAFVGGSKVVILD). A Phosphoserine; by PKA modification is found at Ser1042. Residues Cys1110 and Cys1111 are each lipidated (S-palmitoyl cysteine). Asn1144 and Asn1294 each carry an N-linked (GlcNAc...) asparagine glycan. The tract at residues 1283 to 1312 (RPFTEDDAADPNDSDIDPESRETDLLSGMD) is disordered. Positions 1287–1299 (EDDAADPNDSDID) are enriched in acidic residues. Ser1296 carries the phosphoserine modification. The chain crosses the membrane as a helical span at residues 1351–1371 (IVLPAVFVCIALVFSLIVPPF). The Extracellular segment spans residues 1372–1656 (GKYPSLELQP…ALMTTSVDVL (285 aa)). A glycan (N-linked (GlcNAc...) asparagine) is linked at Asn1453. Cys1463 and Cys1477 are oxidised to a cystine. N-linked (GlcNAc...) asparagine glycans are attached at residues Asn1504 and Asn1637. A run of 6 helical transmembrane segments spans residues 1657 to 1677 (VSIC…VFLI), 1703 to 1723 (FVWD…IFIC), 1735 to 1755 (LPVL…LMYP), 1768 to 1788 (VVLT…TFVL), 1802 to 1822 (ILKS…LIDM), and 1852 to 1872 (NLFA…LIQY). The region spanning 1912 to 2144 (LEIKELTKIY…FGDGYTIVVR (233 aa)) is the ABC transporter 2 domain. ATP is bound at residue 1946–1953 (GVNGAGKS). N-linked (GlcNAc...) asparagine glycosylation is present at Asn2044. Residue Ser2054 is modified to Phosphoserine; by PKA. N-linked (GlcNAc...) asparagine glycosylation occurs at Asn2238.

This sequence belongs to the ABC transporter superfamily. ABCA family. In terms of assembly, interacts with MEGF10. May interact with APOE1; functionally associated with APOE1 in the biogenesis of HDLs. Interacts with ABCA8; this interaction potentiates cholesterol efflux. Interacts with ABCA12 and NR1H2; this interaction is required for ABCA1 localization to the cell surface and is necessary for its normal activity and stability. Phosphorylation on Ser-2054 regulates phospholipid efflux. Post-translationally, palmitoylated by ZDHHC8. Palmitoylation is essential for localization to the plasma membrane. Widely expressed, but most abundant in macrophages.

Its subcellular location is the cell membrane. The protein localises to the endosome. The catalysed reaction is ATP + H2O + phospholipidSide 1 = ADP + phosphate + phospholipidSide 2.. It carries out the reaction a 1,2-diacyl-sn-glycero-3-phosphocholine(out) + ATP + H2O = a 1,2-diacyl-sn-glycero-3-phosphocholine(in) + ADP + phosphate + H(+). It catalyses the reaction a 1,2-diacyl-sn-glycero-3-phospho-L-serine(out) + ATP + H2O = a 1,2-diacyl-sn-glycero-3-phospho-L-serine(in) + ADP + phosphate + H(+). The enzyme catalyses a sphingomyelin(in) + ATP + H2O = a sphingomyelin(out) + ADP + phosphate + H(+). The catalysed reaction is cholesterol(in) + ATP + H2O = cholesterol(out) + ADP + phosphate + H(+). Its activity is regulated as follows. ATPase activity is decreased by cholesterol and ceramide. ATPase activity is stimulated by phosphatidylcholine and to a lesser degree by phosphatidylserine and sphingomyelin. Phospholipid translocase activity is highly reduced by berylium fluoride and aluminum flouride and reduced by N-ethylmaleimide. Its function is as follows. Catalyzes the translocation of specific phospholipids from the cytoplasmic to the extracellular/lumenal leaflet of membrane coupled to the hydrolysis of ATP. Thereby, participates in phospholipid transfer to apolipoproteins to form nascent high density lipoproteins/HDLs. Transports preferentially phosphatidylcholine over phosphatidylserine. May play a similar role in the efflux of intracellular cholesterol to apolipoproteins and the formation of nascent high density lipoproteins/HDLs. Translocates phospholipids from the outer face of the plasma membrane and forces it through its gateway and annulus into an elongated hydrophobic tunnel in its extracellular domain. The sequence is that of Phospholipid-transporting ATPase ABCA1 from Homo sapiens (Human).